The sequence spans 366 residues: Histidinol-phosphate aminotransferase 2 (366 aa).

The span at 1–11 (MQVKDQLSSLQ) shows a compositional bias: polar residues. Residues 1 to 21 (MQVKDQLSSLQPYKPGKSPEQ) are disordered. K222 bears the N6-(pyridoxal phosphate)lysine mark.

Belongs to the class-II pyridoxal-phosphate-dependent aminotransferase family. Histidinol-phosphate aminotransferase subfamily. As to quaternary structure, homodimer. Requires pyridoxal 5'-phosphate as cofactor.

It carries out the reaction L-histidinol phosphate + 2-oxoglutarate = 3-(imidazol-4-yl)-2-oxopropyl phosphate + L-glutamate. It functions in the pathway amino-acid biosynthesis; L-histidine biosynthesis; L-histidine from 5-phospho-alpha-D-ribose 1-diphosphate: step 7/9. The chain is Histidinol-phosphate aminotransferase 2 (hisC2) from Bacillus anthracis.